The following is a 366-amino-acid chain: Quinolinate synthase (366 aa).

2 residues coordinate iminosuccinate: His44 and Ser61. Position 108 (Cys108) interacts with [4Fe-4S] cluster. Iminosuccinate-binding positions include 139–141 and Ser160; that span reads YVN. Cys228 contributes to the [4Fe-4S] cluster binding site. Iminosuccinate-binding positions include 254–256 and Thr271; that span reads HPE. [4Fe-4S] cluster is bound at residue Cys318.

The protein belongs to the quinolinate synthase family. Type 3 subfamily. Requires [4Fe-4S] cluster as cofactor.

It is found in the cytoplasm. It carries out the reaction iminosuccinate + dihydroxyacetone phosphate = quinolinate + phosphate + 2 H2O + H(+). The protein operates within cofactor biosynthesis; NAD(+) biosynthesis; quinolinate from iminoaspartate: step 1/1. Its function is as follows. Catalyzes the condensation of iminoaspartate with dihydroxyacetone phosphate to form quinolinate. This is Quinolinate synthase from Staphylococcus carnosus (strain TM300).